Consider the following 477-residue polypeptide: uncharacterized protein (477 aa).

The helical transmembrane segment at 107–129 (VNFWSLSMACASVLALLGLVYLI) threads the bilayer.

It localises to the membrane. This is an uncharacterized protein from Treponema pallidum (strain Nichols).